We begin with the raw amino-acid sequence, 365 residues long: Sesquiterpene synthase 3 (365 aa).

Mg(2+) contacts are provided by D117, N253, S257, and E261. The DDXXD motif signature appears at 117–121 (DDWSD). Positions 253–261 (NDILSYNRE) match the NSE/DTE motif motif. R341 and Y342 together coordinate (2E,6E)-farnesyl diphosphate.

Belongs to the terpene synthase family. Requires Mg(2+) as cofactor.

The enzyme catalyses (2E,6E)-farnesyl diphosphate = delta-cadinene + diphosphate. Its function is as follows. Terpene cyclase that catalyzes the cyclization of farnesyl diphosphate (FPP) to various sesquiterpenes, including beta-elemene gamma-cadinene, delta-cadinene, and alpha-cadinene. The chain is Sesquiterpene synthase 3 from Postia placenta (strain ATCC 44394 / Madison 698-R) (Brown rot fungus).